Consider the following 146-residue polypeptide: Catabolic 3-dehydroquinase (146 aa).

Tyr24 acts as the Proton acceptor in catalysis. Substrate-binding residues include Asn78, His84, and Asp91. His104 acts as the Proton donor in catalysis. Substrate is bound by residues Ile105–Thr106 and Arg115.

Belongs to the type-II 3-dehydroquinase family. As to quaternary structure, homododecamer. Adopts a ring-like structure, composed of an arrangement of two hexameric rings stacked on top of one another.

The enzyme catalyses 3-dehydroquinate = 3-dehydroshikimate + H2O. The protein operates within aromatic compound metabolism; 3,4-dihydroxybenzoate biosynthesis; 3,4-dihydroxybenzoate from 3-dehydroquinate: step 1/2. Its function is as follows. Is involved in the catabolism of quinate. Allows the utilization of quinate as carbon source via the beta-ketoadipate pathway. In Scheffersomyces stipitis (strain ATCC 58785 / CBS 6054 / NBRC 10063 / NRRL Y-11545) (Yeast), this protein is Catabolic 3-dehydroquinase.